The primary structure comprises 84 residues: Acetylcholine receptor subunit alpha (84 aa).

C7 and C21 form a disulfide bridge. N-linked (GlcNAc...) asparagine glycans are attached at residues N20 and N66. Cysteines 71 and 72 form a disulfide.

It belongs to the ligand-gated ion channel (TC 1.A.9) family. Acetylcholine receptor (TC 1.A.9.1) subfamily. Alpha-1/CHRNA1 sub-subfamily. One of the alpha chains that assemble within the acetylcholine receptor, a pentamer of two alpha chains, a beta, a delta, and a gamma (in immature muscle) or epsilon (in mature muscle) chains. The muscle heteropentamer composed of alpha-1, beta-1, delta, epsilon subunits interacts with the alpha-conotoxin ImII.

Its subcellular location is the postsynaptic cell membrane. The protein resides in the cell membrane. The enzyme catalyses K(+)(in) = K(+)(out). It carries out the reaction Na(+)(in) = Na(+)(out). Its function is as follows. Upon acetylcholine binding, the AChR responds by an extensive change in conformation that affects all subunits and leads to opening of an ion-conducting channel across the plasma membrane. This is Acetylcholine receptor subunit alpha (CHRNA1) from Herpestes ichneumon (Egyptian mongoose).